The following is a 245-amino-acid chain: Cysteine-rich secretory protein 3 (245 aa).

An N-terminal signal peptide occupies residues 1 to 20; sequence MTLFPVLLFLVAGLLPSFPA. The region spanning 43–171 is the SCP domain; it reads VNKHNELRRA…VLKYYYVCQY (129 aa). Intrachain disulfides connect C191–C198, C194–C203, C207–C240, C216–C234, and C225–C238. The ShKT domain occupies 207–240; that stretch reads CKYEDLYSNCKSLKLTLTCKHQLVRDSCKASCNC. N-linked (GlcNAc...) asparagine glycosylation is present at N239.

This sequence belongs to the CRISP family. Interacts with A1BG. As to expression, salivary gland, pancreas and prostate &gt; epididymis, ovary, thymus and colon.

It is found in the secreted. The chain is Cysteine-rich secretory protein 3 (CRISP3) from Homo sapiens (Human).